Consider the following 238-residue polypeptide: Probable transcriptional regulatory protein CPn_0573/CP_0176/CPj0573/CpB0595 (238 aa).

A disordered region spans residues 1-20; sequence MAGHSKWANTKHRKERADHK. Residues 9 to 20 show a composition bias toward basic residues; that stretch reads NTKHRKERADHK.

Belongs to the TACO1 family.

Its subcellular location is the cytoplasm. This Chlamydia pneumoniae (Chlamydophila pneumoniae) protein is Probable transcriptional regulatory protein CPn_0573/CP_0176/CPj0573/CpB0595.